Here is a 492-residue protein sequence, read N- to C-terminus: ATP synthase subunit beta, chloroplastic (492 aa).

170 to 177 (GGAGVGKT) is an ATP binding site.

This sequence belongs to the ATPase alpha/beta chains family. As to quaternary structure, F-type ATPases have 2 components, CF(1) - the catalytic core - and CF(0) - the membrane proton channel. CF(1) has five subunits: alpha(3), beta(3), gamma(1), delta(1), epsilon(1). CF(0) has four main subunits: a(1), b(1), b'(1) and c(9-12).

The protein resides in the plastid. It localises to the chloroplast thylakoid membrane. The enzyme catalyses ATP + H2O + 4 H(+)(in) = ADP + phosphate + 5 H(+)(out). Functionally, produces ATP from ADP in the presence of a proton gradient across the membrane. The catalytic sites are hosted primarily by the beta subunits. The chain is ATP synthase subunit beta, chloroplastic from Angiopteris evecta (Mule's foot fern).